A 180-amino-acid chain; its full sequence is Cytokinin-beta-glucosidase 3 (180 aa).

Its function is as follows. Hydrolyzes cytokinin glucosides thus liberating free cytokinins. The protein is Cytokinin-beta-glucosidase 3 (ROLC3) of Panax ginseng (Korean ginseng).